The sequence spans 361 residues: Membrane-bound lytic murein transglycosylase B (361 aa).

An N-terminal signal peptide occupies residues 1–18 (MFKRRYVTLLPLFVLLAA). The N-palmitoyl cysteine moiety is linked to residue cysteine 19. Cysteine 19 carries S-diacylglycerol cysteine lipidation. The active site involves glutamate 162.

Monomer.

The protein resides in the cell outer membrane. The enzyme catalyses Exolytic cleavage of the (1-&gt;4)-beta-glycosidic linkage between N-acetylmuramic acid (MurNAc) and N-acetylglucosamine (GlcNAc) residues in peptidoglycan, from either the reducing or the non-reducing ends of the peptidoglycan chains, with concomitant formation of a 1,6-anhydrobond in the MurNAc residue.. Functionally, murein-degrading enzyme. Catalyzes the cleavage of the glycosidic bonds between N-acetylmuramic acid and N-acetylglucosamine residues in peptidoglycan. May play a role in recycling of muropeptides during cell elongation and/or cell division. This chain is Membrane-bound lytic murein transglycosylase B (mltB), found in Escherichia coli (strain K12).